We begin with the raw amino-acid sequence, 105 residues long: Large ribosomal subunit protein eL36 (105 aa).

It belongs to the eukaryotic ribosomal protein eL36 family. Component of the large ribosomal subunit.

It is found in the cytoplasm. Its subcellular location is the cytosol. Functionally, component of the large ribosomal subunit. The ribosome is a large ribonucleoprotein complex responsible for the synthesis of proteins in the cell. This chain is Large ribosomal subunit protein eL36 (rpl36), found in Xenopus laevis (African clawed frog).